A 57-amino-acid polypeptide reads, in one-letter code: Stress response protein (57 aa).

The Nuclear localization signal motif lies at 6–10 (RKERR).

In terms of tissue distribution, mesophyll protoplasts.

It is found in the nucleus. In terms of biological role, stress response. May play a role in the reentering of protoplasts into the cell cycle. This is Stress response protein from Nicotiana sylvestris (Wood tobacco).